Consider the following 355-residue polypeptide: Enhancer of mRNA-decapping protein 1 (355 aa).

Disordered stretches follow at residues M1–M146, M210–M230, and N301–Q330. Positions A39 to Q49 are enriched in polar residues. The span at K57 to Q67 shows a compositional bias: basic residues. A compositionally biased stretch (polar residues) spans S91 to Q110. Positions V123–A142 are enriched in low complexity.

This sequence belongs to the EDC family.

The protein localises to the cytoplasm. Its function is as follows. mRNA-binding protein which stimulates mRNA decapping. The protein is Enhancer of mRNA-decapping protein 1 (EDC1) of Eremothecium gossypii (strain ATCC 10895 / CBS 109.51 / FGSC 9923 / NRRL Y-1056) (Yeast).